The chain runs to 114 residues: Large ribosomal subunit protein uL22 (114 aa).

Belongs to the universal ribosomal protein uL22 family. As to quaternary structure, part of the 50S ribosomal subunit.

Its function is as follows. This protein binds specifically to 23S rRNA; its binding is stimulated by other ribosomal proteins, e.g. L4, L17, and L20. It is important during the early stages of 50S assembly. It makes multiple contacts with different domains of the 23S rRNA in the assembled 50S subunit and ribosome. In terms of biological role, the globular domain of the protein is located near the polypeptide exit tunnel on the outside of the subunit, while an extended beta-hairpin is found that lines the wall of the exit tunnel in the center of the 70S ribosome. This is Large ribosomal subunit protein uL22 from Streptococcus pyogenes serotype M6 (strain ATCC BAA-946 / MGAS10394).